The following is a 430-amino-acid chain: Serine--tRNA ligase (430 aa).

237–239 (TAE) serves as a coordination point for L-serine. 268 to 270 (RSE) contacts ATP. Glu291 is an L-serine binding site. An ATP-binding site is contributed by 355-358 (EISS). Position 391 (Ser391) interacts with L-serine.

The protein belongs to the class-II aminoacyl-tRNA synthetase family. Type-1 seryl-tRNA synthetase subfamily. Homodimer. The tRNA molecule binds across the dimer.

It is found in the cytoplasm. The catalysed reaction is tRNA(Ser) + L-serine + ATP = L-seryl-tRNA(Ser) + AMP + diphosphate + H(+). It carries out the reaction tRNA(Sec) + L-serine + ATP = L-seryl-tRNA(Sec) + AMP + diphosphate + H(+). It functions in the pathway aminoacyl-tRNA biosynthesis; selenocysteinyl-tRNA(Sec) biosynthesis; L-seryl-tRNA(Sec) from L-serine and tRNA(Sec): step 1/1. Catalyzes the attachment of serine to tRNA(Ser). Is also able to aminoacylate tRNA(Sec) with serine, to form the misacylated tRNA L-seryl-tRNA(Sec), which will be further converted into selenocysteinyl-tRNA(Sec). The polypeptide is Serine--tRNA ligase (Klebsiella pneumoniae (strain 342)).